The following is a 238-amino-acid chain: Ureidoacrylate amidohydrolase RutB (238 aa).

Asp35 acts as the Proton acceptor in catalysis. The active site involves Lys144. The Nucleophile role is filled by Cys177.

This sequence belongs to the isochorismatase family. RutB subfamily.

It carries out the reaction (Z)-3-ureidoacrylate + H2O + H(+) = (Z)-3-aminoacrylate + NH4(+) + CO2. The catalysed reaction is (Z)-3-ureidoacrylate + H2O = (Z)-3-aminoacrylate + carbamate + H(+). It catalyses the reaction (Z)-2-methylureidoacrylate + H2O + H(+) = (Z)-2-methylaminoacrylate + NH4(+) + CO2. Functionally, hydrolyzes ureidoacrylate to form aminoacrylate and carbamate. The carbamate hydrolyzes spontaneously, thereby releasing one of the nitrogen atoms of the pyrimidine ring as ammonia and one of its carbon atoms as CO2. The sequence is that of Ureidoacrylate amidohydrolase RutB from Caulobacter vibrioides (strain NA1000 / CB15N) (Caulobacter crescentus).